Here is a 138-residue protein sequence, read N- to C-terminus: Putative pre-16S rRNA nuclease (138 aa).

Belongs to the YqgF nuclease family.

It localises to the cytoplasm. In terms of biological role, could be a nuclease involved in processing of the 5'-end of pre-16S rRNA. The protein is Putative pre-16S rRNA nuclease of Escherichia fergusonii (strain ATCC 35469 / DSM 13698 / CCUG 18766 / IAM 14443 / JCM 21226 / LMG 7866 / NBRC 102419 / NCTC 12128 / CDC 0568-73).